A 316-amino-acid polypeptide reads, in one-letter code: HPr kinase/phosphorylase (316 aa).

Active-site residues include H143 and K164. G158–S165 contributes to the ATP binding site. S165 is a Mg(2+) binding site. D182 functions as the Proton acceptor; for phosphorylation activity. Proton donor; for dephosphorylation activity in the catalytic mechanism. Positions L206–N215 are important for the catalytic mechanism of both phosphorylation and dephosphorylation. E207 lines the Mg(2+) pocket. R251 is a catalytic residue. The segment at P272–R277 is important for the catalytic mechanism of dephosphorylation.

This sequence belongs to the HPrK/P family. As to quaternary structure, homohexamer. Requires Mg(2+) as cofactor.

It catalyses the reaction [HPr protein]-L-serine + ATP = [HPr protein]-O-phospho-L-serine + ADP + H(+). The enzyme catalyses [HPr protein]-O-phospho-L-serine + phosphate + H(+) = [HPr protein]-L-serine + diphosphate. In terms of biological role, catalyzes the ATP- as well as the pyrophosphate-dependent phosphorylation of a specific serine residue in HPr, a phosphocarrier protein of the phosphoenolpyruvate-dependent sugar phosphotransferase system (PTS). HprK/P also catalyzes the pyrophosphate-producing, inorganic phosphate-dependent dephosphorylation (phosphorolysis) of seryl-phosphorylated HPr (P-Ser-HPr). This is HPr kinase/phosphorylase from Xanthomonas oryzae pv. oryzae (strain MAFF 311018).